The following is a 523-amino-acid chain: MSQQVIIFDTTLRDGEQALQASLSAKEKLQIALALERMGVDVMEVGFPVSSPGDFESVQTIARIIKNSRVCALARCVEKDIDVAAQALKVADAFRIHTFIATSPMHIATKLRSTLDEVIERAVYMVKRARNYTDDVEFSCEDAGRTPVNDLARVVEAAINAGARTINIPDTVGYTMPFEFARIISGLYERVPNIDNAIISVHTHDDLGLAVGNSLAAVHAGARQVEGAMNGIGERAGNCALEEVIMAIKVRKDIMNVHTNINHHEIWRTSQTVSQICNMPIPTNKAIVGSGAFAHSSGIHQDGVLKNRENYEIMTPESIGLNQVQLNLTSRSGRAAVKHRMEEMGYQESDYNLDRLYDAFLKLADKKGQVFDYDLEALAFINKQQEEPEHFRLDYFSVQSGSSDIATASVKLACGEETKAEAANGNGPVDAIYQAINRITGYDVELVKYDLNAKGQGKDALGQVDIVVNHHGRRFHGVGLATDIVESSAKAMVHVLNNIWRAAEVEKELQRKAHNKENNKEIV.

The Pyruvate carboxyltransferase domain occupies 5 to 267 (VIIFDTTLRD…HTNINHHEIW (263 aa)). Mn(2+) is bound by residues aspartate 14, histidine 202, histidine 204, and asparagine 238. The tract at residues 392–523 (RLDYFSVQSG…HNKENNKEIV (132 aa)) is regulatory domain.

The protein belongs to the alpha-IPM synthase/homocitrate synthase family. LeuA type 1 subfamily. Homodimer. The cofactor is Mn(2+).

It is found in the cytoplasm. It catalyses the reaction 3-methyl-2-oxobutanoate + acetyl-CoA + H2O = (2S)-2-isopropylmalate + CoA + H(+). It participates in amino-acid biosynthesis; L-leucine biosynthesis; L-leucine from 3-methyl-2-oxobutanoate: step 1/4. Catalyzes the condensation of the acetyl group of acetyl-CoA with 3-methyl-2-oxobutanoate (2-ketoisovalerate) to form 3-carboxy-3-hydroxy-4-methylpentanoate (2-isopropylmalate). This is 2-isopropylmalate synthase from Salmonella arizonae (strain ATCC BAA-731 / CDC346-86 / RSK2980).